Here is a 234-residue protein sequence, read N- to C-terminus: Sugar fermentation stimulation protein A (234 aa).

A DNA-binding region (H-T-H motif) is located at residues 201–220; sequence LLSEAQQRGVEILAYKAELS.

Belongs to the SfsA family.

Binds to DNA non-specifically. Could be a regulatory factor involved in maltose metabolism. The chain is Sugar fermentation stimulation protein A from Escherichia coli (strain SMS-3-5 / SECEC).